Reading from the N-terminus, the 214-residue chain is ATP-dependent Clp protease proteolytic subunit 2 (214 aa).

Catalysis depends on S110, which acts as the Nucleophile. H135 is a catalytic residue.

Belongs to the peptidase S14 family. In terms of assembly, fourteen ClpP subunits assemble into 2 heptameric rings which stack back to back to give a disk-like structure with a central cavity, resembling the structure of eukaryotic proteasomes.

It localises to the cytoplasm. It catalyses the reaction Hydrolysis of proteins to small peptides in the presence of ATP and magnesium. alpha-casein is the usual test substrate. In the absence of ATP, only oligopeptides shorter than five residues are hydrolyzed (such as succinyl-Leu-Tyr-|-NHMec, and Leu-Tyr-Leu-|-Tyr-Trp, in which cleavage of the -Tyr-|-Leu- and -Tyr-|-Trp bonds also occurs).. Functionally, cleaves peptides in various proteins in a process that requires ATP hydrolysis. Has a chymotrypsin-like activity. Plays a major role in the degradation of misfolded proteins. The chain is ATP-dependent Clp protease proteolytic subunit 2 from Mycobacterium bovis (strain ATCC BAA-935 / AF2122/97).